A 155-amino-acid chain; its full sequence is Aspartate carbamoyltransferase regulatory chain (155 aa).

Zn(2+)-binding residues include cysteine 111, cysteine 116, cysteine 137, and cysteine 140.

This sequence belongs to the PyrI family. In terms of assembly, contains catalytic and regulatory chains. Zn(2+) is required as a cofactor.

Functionally, involved in allosteric regulation of aspartate carbamoyltransferase. This Haloarcula marismortui (strain ATCC 43049 / DSM 3752 / JCM 8966 / VKM B-1809) (Halobacterium marismortui) protein is Aspartate carbamoyltransferase regulatory chain.